A 303-amino-acid chain; its full sequence is Polyisoprenyl-teichoic acid--peptidoglycan teichoic acid transferase TagU (303 aa).

At 1 to 4 the chain is on the cytoplasmic side; sequence MKKK. A helical; Signal-anchor for type II membrane protein transmembrane segment spans residues 5-25; the sequence is ILFWVLGILGVLIIGGGIYAY. The Extracellular segment spans residues 26-303; the sequence is NVYSSVSNTL…KLRTHLEVTK (278 aa).

It belongs to the LytR/CpsA/Psr (LCP) family.

The protein resides in the cell membrane. Its pathway is cell wall biogenesis. In terms of biological role, may catalyze the final step in cell wall teichoic acid biosynthesis, the transfer of the anionic cell wall polymers (APs) from their lipid-linked precursor to the cell wall peptidoglycan (PG). This chain is Polyisoprenyl-teichoic acid--peptidoglycan teichoic acid transferase TagU, found in Bacillus anthracis (strain A0248).